Here is a 221-residue protein sequence, read N- to C-terminus: uncharacterized protein (221 aa).

The signal sequence occupies residues 1–26 (MVRLVPRAFAATVALLAAGFSPATAS).

This is an uncharacterized protein from Mycobacterium tuberculosis (strain ATCC 25618 / H37Rv).